A 193-amino-acid polypeptide reads, in one-letter code: Holliday junction branch migration complex subunit RuvA (193 aa).

The interval 1–63 (MIAHIQGKLV…EDSHSLYGFA (63 aa)) is domain I. Residues 64–142 (EKSEKEIFKL…KLYDLDQVSI (79 aa)) form a domain II region. The tract at residues 143-145 (SQS) is flexible linker. The interval 145 to 193 (SNTNKDEALSALEVLGFIRKSAEKVVEKIVATMPDATVETIIKQALKNL) is domain III.

The protein belongs to the RuvA family. As to quaternary structure, homotetramer. Forms an RuvA(8)-RuvB(12)-Holliday junction (HJ) complex. HJ DNA is sandwiched between 2 RuvA tetramers; dsDNA enters through RuvA and exits via RuvB. An RuvB hexamer assembles on each DNA strand where it exits the tetramer. Each RuvB hexamer is contacted by two RuvA subunits (via domain III) on 2 adjacent RuvB subunits; this complex drives branch migration. In the full resolvosome a probable DNA-RuvA(4)-RuvB(12)-RuvC(2) complex forms which resolves the HJ.

The protein localises to the cytoplasm. Functionally, the RuvA-RuvB-RuvC complex processes Holliday junction (HJ) DNA during genetic recombination and DNA repair, while the RuvA-RuvB complex plays an important role in the rescue of blocked DNA replication forks via replication fork reversal (RFR). RuvA specifically binds to HJ cruciform DNA, conferring on it an open structure. The RuvB hexamer acts as an ATP-dependent pump, pulling dsDNA into and through the RuvAB complex. HJ branch migration allows RuvC to scan DNA until it finds its consensus sequence, where it cleaves and resolves the cruciform DNA. This chain is Holliday junction branch migration complex subunit RuvA, found in Flavobacterium psychrophilum (strain ATCC 49511 / DSM 21280 / CIP 103535 / JIP02/86).